The chain runs to 79 residues: Major outer membrane lipoprotein Lpp 2 (79 aa).

The first 21 residues, Met-1–Gly-21, serve as a signal peptide directing secretion. Residue Cys-22 is the site of N-palmitoyl cysteine attachment. A lipid anchor (S-diacylglycerol cysteine) is attached at Cys-22. Repeats lie at residues Asn-25–Val-35 and Ser-39–Val-49. Residues Ile-28–Arg-76 adopt a coiled-coil conformation. The disordered stretch occupies residues Lys-60–Lys-79. Position 79 is an N6-murein peptidoglycan lysine (Lys-79).

Belongs to the Lpp family. Homotrimer.

It is found in the cell outer membrane. Its subcellular location is the secreted. The protein resides in the cell wall. Its function is as follows. A highly abundant outer membrane lipoprotein that controls the distance between the inner and outer membranes. The only protein known to be covalently linked to the peptidoglycan network (PGN). Also non-covalently binds the PGN. The link between the cell outer membrane and PGN contributes to maintenance of the structural and functional integrity of the cell envelope, and maintains the correct distance between the PGN and the outer membrane. In Salmonella paratyphi A (strain ATCC 9150 / SARB42), this protein is Major outer membrane lipoprotein Lpp 2.